We begin with the raw amino-acid sequence, 141 residues long: Perlwapin-like protein (141 aa).

The first 19 residues, 1-19, serve as a signal peptide directing secretion; it reads MNVYFILFLGVFAFIEVNC. The WAP domain occupies 23 to 71; that stretch reads KSKSLGTCPKLDVSTVCVVDYKFNCLFQKQCPSGYRCCTYGCNRRCAAV. Disulfide bonds link Cys-30/Cys-60, Cys-39/Cys-64, Cys-47/Cys-59, Cys-53/Cys-68, Cys-81/Cys-105, and Cys-92/Cys-104.

In terms of tissue distribution, component of the organic matrix of calcified shell layers like nacre and prisms.

It localises to the secreted. This is Perlwapin-like protein from Mytilus galloprovincialis (Mediterranean mussel).